The chain runs to 300 residues: Nucleotide-binding protein MCCL_0516 (300 aa).

An ATP-binding site is contributed by 15 to 22; that stretch reads GMSGAGKS. GTP is bound at residue 66–69; that stretch reads DLRG.

It belongs to the RapZ-like family.

In terms of biological role, displays ATPase and GTPase activities. In Macrococcus caseolyticus (strain JCSC5402) (Macrococcoides caseolyticum), this protein is Nucleotide-binding protein MCCL_0516.